Consider the following 311-residue polypeptide: Nod factor export ATP-binding protein I (311 aa).

Residues Ile-13–Tyr-243 enclose the ABC transporter domain. Gly-45–Ser-52 provides a ligand contact to ATP.

This sequence belongs to the ABC transporter superfamily. Lipooligosaccharide exporter (TC 3.A.1.102) family. The complex is composed of two ATP-binding proteins (NodI) and two transmembrane proteins (NodJ).

It is found in the cell inner membrane. Its function is as follows. Part of the ABC transporter complex NodIJ involved in the export of the nodulation factors (Nod factors), the bacterial signal molecules that induce symbiosis and subsequent nodulation induction. Nod factors are LCO (lipo-chitin oligosaccharide), a modified beta-1,4-linked N-acetylglucosamine oligosaccharide. This subunit is responsible for energy coupling to the transport system. The chain is Nod factor export ATP-binding protein I from Rhizobium johnstonii (strain DSM 114642 / LMG 32736 / 3841) (Rhizobium leguminosarum bv. viciae).